Consider the following 295-residue polypeptide: MSKIPSVNIKALLDAGVHFGHKTSRWNPKMASYIYGERDDVHIIDLRQSVALMSVALNAIYETVKKDGKILFVSTKIQASDIIAEYAEKCGQYYVNHRWLGGMLTNWKTIAGSIEKLNKLDKTLENEEALMGYTKKEILYMSRKKDKLLLSLAGIRNLNSKPDLLVVIDTNKEHIAINEAVKLNVPIVAVVDTNSNPDNVDYPIPGNDDSIRSIRLYCSLFADAALQGLEESMKASGVDMGAMQEHTDKGLTSKNVSKLKQAKKFSKTKNIDEETNTEFEKALNDADENKNSDNA.

Residues 263–295 (KKFSKTKNIDEETNTEFEKALNDADENKNSDNA) are disordered. Residues 278–295 (EFEKALNDADENKNSDNA) show a composition bias toward basic and acidic residues.

It belongs to the universal ribosomal protein uS2 family.

This Rickettsia peacockii (strain Rustic) protein is Small ribosomal subunit protein uS2.